The primary structure comprises 181 residues: D-lyxose/D-mannose isomerase (181 aa).

Mn(2+)-binding residues include H75, H77, E88, and H143.

The protein belongs to the D-lyxose ketol-isomerase family. As to quaternary structure, homodimer. Requires Mn(2+) as cofactor.

The enzyme catalyses D-lyxose = D-xylulose. It catalyses the reaction D-mannose = D-fructose. Sugar isomerase that catalyzes the reversible isomerization of D-lyxose to D-xylulose, and D-mannose to D-fructose. Shows optimum activity using D-lyxose as substrate, but can also effectively catalyze the isomerization between D-fructose and D-mannose. This Thermosediminibacter oceani (strain ATCC BAA-1034 / DSM 16646 / JW/IW-1228P) protein is D-lyxose/D-mannose isomerase.